Consider the following 120-residue polypeptide: MKLSRKESVRRRHQRVRRKINGTAERPRLSVFRSNNHIYAQIIDDVAQHTLAAASTLEATLRGELESTATQEASAAVGKLVAQRALDKGIEQVVFDRGGNLYHGRVKALAEAARSAGLNF.

Positions 1-23 (MKLSRKESVRRRHQRVRRKINGT) are disordered. Basic residues predominate over residues 8 to 20 (SVRRRHQRVRRKI).

The protein belongs to the universal ribosomal protein uL18 family. As to quaternary structure, part of the 50S ribosomal subunit; part of the 5S rRNA/L5/L18/L25 subcomplex. Contacts the 5S and 23S rRNAs.

Functionally, this is one of the proteins that bind and probably mediate the attachment of the 5S RNA into the large ribosomal subunit, where it forms part of the central protuberance. This Microcystis aeruginosa (strain NIES-843 / IAM M-2473) protein is Large ribosomal subunit protein uL18.